Reading from the N-terminus, the 306-residue chain is Porphobilinogen deaminase (306 aa).

An S-(dipyrrolylmethanemethyl)cysteine modification is found at Cys239.

Belongs to the HMBS family. As to quaternary structure, monomer. Requires dipyrromethane as cofactor.

The enzyme catalyses 4 porphobilinogen + H2O = hydroxymethylbilane + 4 NH4(+). The protein operates within porphyrin-containing compound metabolism; protoporphyrin-IX biosynthesis; coproporphyrinogen-III from 5-aminolevulinate: step 2/4. Functionally, tetrapolymerization of the monopyrrole PBG into the hydroxymethylbilane pre-uroporphyrinogen in several discrete steps. This is Porphobilinogen deaminase from Helicobacter pylori (strain P12).